The sequence spans 497 residues: MDPLGAPSQFVDVDTLVSWGDSYEDEVNSSDSTAEAFQEDSNRSPFLYNRDINGKVVLWKGDVALLNCTAIVNTSNESLTDKNPVSESIFMLAGPDLKEDLQKLKGCRTGEAKLTKGFNLAARFIIHTVGPKYKSRYRTAAESSLYSCYRNVLQLAKEQSMSSVGFCVINSAKRGYPLEDATHIALRTVRRFLEIHGETIEKVVFAISELEEATYQKLLPLYFPRSLKEESQSLPSLPADIGNAEGEPVVPERQIRISEKPGASEDHEEDEDEGLGVDLSFIGSHAFARMEGDIDKQRKLILQGQLSEAALQKQHQRNYNRWLCQARSEDLSDIASLKALYQTGVDNCGRTVMVVVGRNIPVTLIDMDKALLYFIHVMDHIAVKEYVLVYFHTLTSEYNHLDSDFLKKLYDVVDIKYKRNLKAVYFVHPTFRSKVSTWFFTTFSVSGLKDKIHHVDSLQQLFSAISPEQIDFPPFVLEYDARENGPYFASYPPSPDL.

In terms of domain architecture, Macro spans 43–223; sequence RSPFLYNRDI…TYQKLLPLYF (181 aa). Serine 280 is subject to Phosphoserine. One can recognise a CRAL-TRIO domain in the interval 333-481; sequence DIASLKALYQ…FPPFVLEYDA (149 aa).

The protein belongs to the GDAP2 family.

This Rattus norvegicus (Rat) protein is Ganglioside-induced differentiation-associated-protein 2 (Gdap2).